Consider the following 67-residue polypeptide: uncharacterized protein (67 aa).

2 helical membrane passes run 10–30 (EFFI…IIMW) and 40–60 (LMVG…WMVF).

The protein belongs to the plectrovirus ORF10 family.

The protein resides in the host membrane. This is an uncharacterized protein from Spiroplasma melliferum (SpV1).